Reading from the N-terminus, the 334-residue chain is MENSEEESVGVAPQEFRELVLLESSLLEGEPSVQAPEQSPGAPAGDNQMVKPLVICGPVEDWVPLAEVLHHPDTCEEGDEATMAELKVTEVVDVKNEGEEVKDQKQEGEQDQQPELEKNPEQACDSKDQQGIQRLPLSGGGPAERRSKMEELELLQLELSFVNARCSGAFARIKAKVAKMRRPHFDRRKTIIQGIPGFWAKAMMNHPQMSSIISNQDEDLLSYMLSLEVEEYNPGLRMCRMMFFFSENPYFRNDIVTKDYQLSIIGYKESDSSTIEWIGQAEHGYANCMQDTTRLTFFNWLCAHKFPGSNRIAEIIMDDLWPNPLYYYPKEDHS.

Residue Ser4 is modified to Phosphoserine. Disordered regions lie at residues 27–46 and 96–146; these read LEGE…PAGD and NEGE…AERR. 2 stretches are compositionally biased toward basic and acidic residues: residues 96-108 and 115-128; these read NEGE…KQEG and ELEK…DSKD.

Belongs to the nucleosome assembly protein (NAP) family. Post-translationally, phosphorylated. Testis.

Its subcellular location is the cytoplasm. The protein resides in the nucleus. May be involved in sperm differentiation and proliferation. In Rattus norvegicus (Rat), this protein is Testis-specific Y-encoded protein 1 (Tspy1).